A 105-amino-acid polypeptide reads, in one-letter code: Integration host factor subunit alpha (105 aa).

It belongs to the bacterial histone-like protein family. As to quaternary structure, heterodimer of an alpha and a beta chain.

Its function is as follows. This protein is one of the two subunits of integration host factor, a specific DNA-binding protein that functions in genetic recombination as well as in transcriptional and translational control. This is Integration host factor subunit alpha from Azorhizobium caulinodans (strain ATCC 43989 / DSM 5975 / JCM 20966 / LMG 6465 / NBRC 14845 / NCIMB 13405 / ORS 571).